Reading from the N-terminus, the 189-residue chain is Ribosome maturation factor RimM (189 aa).

The PRC barrel domain occupies 96–169 (EDEFFQTDLI…TLLVEPYAAG (74 aa)). The interval 170-189 (LIADDEDERPQNEKKKPKKS) is disordered.

Belongs to the RimM family. As to quaternary structure, binds ribosomal protein uS19.

Its subcellular location is the cytoplasm. An accessory protein needed during the final step in the assembly of 30S ribosomal subunit, possibly for assembly of the head region. Essential for efficient processing of 16S rRNA. May be needed both before and after RbfA during the maturation of 16S rRNA. It has affinity for free ribosomal 30S subunits but not for 70S ribosomes. This is Ribosome maturation factor RimM from Brucella anthropi (strain ATCC 49188 / DSM 6882 / CCUG 24695 / JCM 21032 / LMG 3331 / NBRC 15819 / NCTC 12168 / Alc 37) (Ochrobactrum anthropi).